The sequence spans 137 residues: Large ribosomal subunit protein uL16c (137 aa).

The segment covering 1–17 has biased composition (basic residues); sequence MLSPKKTRFRRQHRGRM. Residues 1–21 are disordered; the sequence is MLSPKKTRFRRQHRGRMKGLS.

Belongs to the universal ribosomal protein uL16 family. Part of the 50S ribosomal subunit.

The protein resides in the plastid. This chain is Large ribosomal subunit protein uL16c, found in Cuscuta obtusiflora (Peruvian dodder).